The sequence spans 276 residues: Diaminopimelate epimerase (276 aa).

Asn13, Gln46, and Asn66 together coordinate substrate. Cys75 functions as the Proton donor in the catalytic mechanism. Residues 76–77 (GN), Asn159, Asn192, and 210–211 (ER) each bind substrate. The Proton acceptor role is filled by Cys219. A substrate-binding site is contributed by 220–221 (GT).

The protein belongs to the diaminopimelate epimerase family. In terms of assembly, homodimer.

Its subcellular location is the cytoplasm. The catalysed reaction is (2S,6S)-2,6-diaminopimelate = meso-2,6-diaminopimelate. It functions in the pathway amino-acid biosynthesis; L-lysine biosynthesis via DAP pathway; DL-2,6-diaminopimelate from LL-2,6-diaminopimelate: step 1/1. In terms of biological role, catalyzes the stereoinversion of LL-2,6-diaminopimelate (L,L-DAP) to meso-diaminopimelate (meso-DAP), a precursor of L-lysine and an essential component of the bacterial peptidoglycan. This chain is Diaminopimelate epimerase, found in Pseudomonas entomophila (strain L48).